A 259-amino-acid polypeptide reads, in one-letter code: Ubiquinone/menaquinone biosynthesis C-methyltransferase UbiE (259 aa).

S-adenosyl-L-methionine contacts are provided by residues Thr82, Asp103, 131–132 (NA), and Ser148.

This sequence belongs to the class I-like SAM-binding methyltransferase superfamily. MenG/UbiE family.

The catalysed reaction is a 2-demethylmenaquinol + S-adenosyl-L-methionine = a menaquinol + S-adenosyl-L-homocysteine + H(+). The enzyme catalyses a 2-methoxy-6-(all-trans-polyprenyl)benzene-1,4-diol + S-adenosyl-L-methionine = a 5-methoxy-2-methyl-3-(all-trans-polyprenyl)benzene-1,4-diol + S-adenosyl-L-homocysteine + H(+). It functions in the pathway quinol/quinone metabolism; menaquinone biosynthesis; menaquinol from 1,4-dihydroxy-2-naphthoate: step 2/2. It participates in cofactor biosynthesis; ubiquinone biosynthesis. Functionally, methyltransferase required for the conversion of demethylmenaquinol (DMKH2) to menaquinol (MKH2) and the conversion of 2-polyprenyl-6-methoxy-1,4-benzoquinol (DDMQH2) to 2-polyprenyl-3-methyl-6-methoxy-1,4-benzoquinol (DMQH2). The sequence is that of Ubiquinone/menaquinone biosynthesis C-methyltransferase UbiE from Vibrio parahaemolyticus serotype O3:K6 (strain RIMD 2210633).